Here is an 868-residue protein sequence, read N- to C-terminus: Protein translocase subunit SecA (868 aa).

ATP contacts are provided by residues Q88, 106–110 (GEGKT), and D509. A compositionally biased stretch (polar residues) spans 816–827 (NAENEPLNYNNQ). The interval 816–868 (NAENEPLNYNNQGEDENFTPEKKIPRNAPCPCGSGKKYKDCHGKSGPKKGIFA) is disordered. Zn(2+)-binding residues include C845, C847, C856, and H857.

Belongs to the SecA family. Monomer and homodimer. Part of the essential Sec protein translocation apparatus which comprises SecA, SecYEG and auxiliary proteins SecDF-YajC and YidC. Zn(2+) is required as a cofactor.

It is found in the cell inner membrane. Its subcellular location is the cytoplasm. It catalyses the reaction ATP + H2O + cellular proteinSide 1 = ADP + phosphate + cellular proteinSide 2.. In terms of biological role, part of the Sec protein translocase complex. Interacts with the SecYEG preprotein conducting channel. Has a central role in coupling the hydrolysis of ATP to the transfer of proteins into and across the cell membrane, serving as an ATP-driven molecular motor driving the stepwise translocation of polypeptide chains across the membrane. The polypeptide is Protein translocase subunit SecA (Campylobacter concisus (strain 13826)).